Reading from the N-terminus, the 342-residue chain is MMKMMRNKPTNLPTAGMTNGGRGSGGGGGGGGRESGGRDLEIRPGGMLVQKRNPDLDPVGPPPPPMIRVRIKYGAVYHEINISPQASFGELKKMLTGPTGIHHQDQKLMYKDKERDSKAFLDVSGVKDKSKMVLIEDPLSQEKRFLEMRKIAKTEKASKAISDISLEVDRLGGRVSAFEMVTKKGGKIAEKDLVTVIELLMNELIKLDAIVAEGDVKLQRKMQVKRVQNYVETLDALKVKNSMANGQQKQSSTAQRLAPIQEHNNEERQEQKPIQSLMDMPIQYKEKKQEIEEEPRNSGEGPFVLDSSAKWETFDHHPVTPLSSTTAKNNAIPPRFNWEFFD.

Residues 1–41 (MMKMMRNKPTNLPTAGMTNGGRGSGGGGGGGGRESGGRDLE) are disordered. A compositionally biased stretch (polar residues) spans 8–17 (KPTNLPTAGM). Over residues 18–34 (TNGGRGSGGGGGGGGRE) the composition is skewed to gly residues. Positions 65-141 (PMIRVRIKYG…MVLIEDPLSQ (77 aa)) constitute a Ubiquitin-like domain. A BAG domain is found at 160–238 (AISDISLEVD…NYVETLDALK (79 aa)). Residue Ser-298 is modified to Phosphoserine.

In terms of assembly, binds to the ATPase domain of HSP70/HSC70 chaperones.

Co-chaperone that regulates diverse cellular pathways, such as programmed cell death and stress responses. In Arabidopsis thaliana (Mouse-ear cress), this protein is BAG family molecular chaperone regulator 1 (BAG1).